Reading from the N-terminus, the 919-residue chain is Isoleucine--tRNA ligase (919 aa).

The short motif at Pro-57 to His-67 is the 'HIGH' region element. Glu-569 is a binding site for L-isoleucyl-5'-AMP. The 'KMSKS' region motif lies at Lys-610–Ser-614. Residue Lys-613 participates in ATP binding. Residues Cys-896, Cys-899, Cys-911, and Cys-914 each contribute to the Zn(2+) site.

Belongs to the class-I aminoacyl-tRNA synthetase family. IleS type 1 subfamily. As to quaternary structure, monomer. The cofactor is Zn(2+).

Its subcellular location is the cytoplasm. It carries out the reaction tRNA(Ile) + L-isoleucine + ATP = L-isoleucyl-tRNA(Ile) + AMP + diphosphate. Catalyzes the attachment of isoleucine to tRNA(Ile). As IleRS can inadvertently accommodate and process structurally similar amino acids such as valine, to avoid such errors it has two additional distinct tRNA(Ile)-dependent editing activities. One activity is designated as 'pretransfer' editing and involves the hydrolysis of activated Val-AMP. The other activity is designated 'posttransfer' editing and involves deacylation of mischarged Val-tRNA(Ile). In Aliarcobacter butzleri (strain RM4018) (Arcobacter butzleri), this protein is Isoleucine--tRNA ligase.